Here is a 427-residue protein sequence, read N- to C-terminus: Tyrosine--tRNA ligase (427 aa).

Position 33 (Y33) interacts with L-tyrosine. The 'HIGH' region signature appears at 38-47 (PTAPSLHVGN). L-tyrosine is bound by residues Y168 and Q172. A 'KMSKS' region motif is present at residues 228–232 (KFGKS). K231 serves as a coordination point for ATP. The S4 RNA-binding domain occupies 358 to 426 (EHMLDLVAST…GKKHHYLIKV (69 aa)).

This sequence belongs to the class-I aminoacyl-tRNA synthetase family. TyrS type 1 subfamily. In terms of assembly, homodimer.

The protein resides in the cytoplasm. It catalyses the reaction tRNA(Tyr) + L-tyrosine + ATP = L-tyrosyl-tRNA(Tyr) + AMP + diphosphate + H(+). Catalyzes the attachment of tyrosine to tRNA(Tyr) in a two-step reaction: tyrosine is first activated by ATP to form Tyr-AMP and then transferred to the acceptor end of tRNA(Tyr). The protein is Tyrosine--tRNA ligase of Amoebophilus asiaticus (strain 5a2).